We begin with the raw amino-acid sequence, 63 residues long: MPIAQLYIIEGRTDEQKETLIRQVSEAMANSLDAPLERVRVLITEMPKNHFGIGGEPASKVRR.

P2 serves as the catalytic Proton acceptor; via imino nitrogen.

This sequence belongs to the 4-oxalocrotonate tautomerase family. Homohexamer.

It carries out the reaction (2Z,4E)-2-hydroxyhexa-2,4-dienedioate = (3E)-2-oxohex-3-enedioate. It functions in the pathway xenobiotic degradation; toluene degradation. Functionally, catalyzes the ketonization of 2-hydroxymuconate stereoselectively to yield 2-oxo-3-hexenedioate. In Pseudomonas sp. (strain CF600), this protein is 2-hydroxymuconate tautomerase (dmpI).